The chain runs to 304 residues: ADP-polyphosphate phosphotransferase (304 aa).

Belongs to the polyphosphate kinase 2 (PPK2) family. Class I subfamily.

It catalyses the reaction [phosphate](n) + ATP = [phosphate](n+1) + ADP. Uses inorganic polyphosphate (polyP) as a donor to convert ADP to ATP. The polypeptide is ADP-polyphosphate phosphotransferase (Pseudomonas aeruginosa (strain ATCC 15692 / DSM 22644 / CIP 104116 / JCM 14847 / LMG 12228 / 1C / PRS 101 / PAO1)).